A 425-amino-acid polypeptide reads, in one-letter code: RNA polymerase II-associated factor 1 homolog (425 aa).

Residues 152 to 174 (KKNQQVEDMYRDKQSQIDAINKT) are a coiled coil. Residues 331 to 425 (SRKSKLTLTY…KEPTVDSDSD (95 aa)) are disordered. Composition is skewed to basic and acidic residues over residues 344-380 (SELE…KEEG) and 393-402 (DKPQKSRSDS).

This sequence belongs to the PAF1 family. In terms of assembly, component of the PAF1 complex which consists of at least cdc-73, ctr-9, leo-1, pafo-1 and rtfo-1.

It localises to the nucleus. Component of the PAF1 complex which is a multifunctional complex involved in transcription initiation via genetic interactions with TATA-binding proteins, elongation and transcription-coupled histone modification. The protein is RNA polymerase II-associated factor 1 homolog of Caenorhabditis elegans.